The chain runs to 164 residues: Glutamate uptake regulatory protein (164 aa).

An HTH asnC-type domain is found at 5-66 (LDDFDIKILD…LLDPQKIGLG (62 aa)). Residues 24 to 43 (MAELSEKTGLSANACWRRIR) constitute a DNA-binding region (H-T-H motif).

In terms of biological role, represses the secondary, H(+)-coupled glutamate uptake system (Gluemp) genes. This Zymomonas mobilis subsp. mobilis (strain ATCC 31821 / ZM4 / CP4) protein is Glutamate uptake regulatory protein (grp).